The sequence spans 2626 residues: Unconventional myosin-IXa (2626 aa).

One can recognise a Ras-associating domain in the interval 14–112 (NEHTLRIYPG…YRFLLREKNL (99 aa)). The Myosin motor domain occupies 146-1017 (KDFDDLCSLP…ERQHLQDLLH (872 aa)). A helical membrane pass occupies residues 175–195 (IYTYVGSILIAINPFKFLPIY). 239–246 (GESGSGKT) provides a ligand contact to ATP. Position 755 is a phosphoserine (Ser755). The segment at 908 to 919 (QAEPYFVKCIRS) is actin-binding. IQ domains lie at 1021–1041 (LRRIILLQRWFRVLLSRQQFL), 1043–1072 (LRQASVIIQRFWRNYLNQKQVRNAAVEKDA), 1075–1104 (MASAASLLQASWRAHLERQRYLELRAAAVI), 1116–1145 (RHRAATCIQSRWRGYRQSKKYKEQRNKIIL), and 1139–1168 (QRNKIILLQSIYRGFRARQRYKALKEERLK). Residues 1022–1163 (RRIILLQRWF…RARQRYKALK (142 aa)) form a neck or regulatory domain region. A tail region spans residues 1164–2589 (EERLKETKLE…LKNVKNSPQK (1426 aa)). The segment covering 1221-1240 (RESSMDFSKESPDKQQERGR) has biased composition (basic and acidic residues). The interval 1221–1276 (RESSMDFSKESPDKQQERGRSQSGTDLQGDVIVRQRPKSLEDLHQKKVGRAKRESR) is disordered. Ser1243 is subject to Phosphoserine. Thr1245 bears the Phosphothreonine mark. Ser1259 is subject to Phosphoserine. Residues 1265–1292 (QKKVGRAKRESRRMRELEQAIFSLELLK) are a coiled coil. Basic residues predominate over residues 1266–1276 (KKVGRAKRESR). Phosphoserine occurs at positions 1300 and 1318. Residues 1360–1375 (PSTFTNPKFDSQNNAL) show a composition bias toward polar residues. The segment at 1360–1397 (PSTFTNPKFDSQNNALSASSETSSTFSGKGASSDSEHL) is disordered. Positions 1376-1386 (SASSETSSTFS) are enriched in low complexity. Residues 1493–1540 (TVLKKLEKLNIEKEKRQKQLQQQNEKEMMEQIRQQTDILEKERKAFKT) are a coiled coil. Disordered stretches follow at residues 1562–1602 (VERP…PPKD), 1618–1673 (SRTV…SRPI), 1689–1726 (GNPQVHKQDEPAWKSKLAGPGQREVARPAHKKKARMAR), 1765–1784 (SELGPVSSLGQASHSDSEMT), and 1872–1907 (QYHPTPPLSPELPGSCRKEFKENKEPSPKAKRKRGV). 2 stretches are compositionally biased toward basic and acidic residues: residues 1620–1632 (TVKELTKTERMGT) and 1659–1669 (HRSDDPSREGS). The span at 1716 to 1726 (PAHKKKARMAR) shows a compositional bias: basic residues. Residues 1772–1784 (SLGQASHSDSEMT) show a composition bias toward polar residues. A compositionally biased stretch (basic and acidic residues) spans 1887 to 1899 (CRKEFKENKEPSP). Ser2016 is modified (phosphoserine). The Phorbol-ester/DAG-type zinc-finger motif lies at 2067–2116 (GHMFKATQYSIPTYCEYCSSLIWIMDRASVCKLCKYACHKKCCLKTTAKC). Positions 2131-2319 (VELSRLTSED…LIVVEQMNKY (189 aa)) constitute a Rho-GAP domain. The tract at residues 2365 to 2385 (SGKGRLHRGSHPNPSSPVIVR) is disordered. A Phosphoserine modification is found at Ser2380. Positions 2408-2444 (TDQQQAAMQQEEKVLTEQIENLQKEKEELTFEMLVLE) form a coiled coil. The disordered stretch occupies residues 2449–2527 (DDEALESEAS…NTTSSHGTRK (79 aa)). Residues 2504–2522 (SLDSVSSSVSSCLSNTTSS) are compositionally biased toward low complexity. The residue at position 2542 (Ser2542) is a Phosphoserine. A disordered region spans residues 2552-2614 (PLGQAKSLED…TVDSDCSSTQ (63 aa)).

This sequence belongs to the TRAFAC class myosin-kinesin ATPase superfamily. Myosin family. Post-translationally, phosphorylated by ALPK1 following monosodium urate monohydrate (MSU)-induced inflammation. Expressed at high levels in brain, followed by testis and spleen. Expressed at very low levels, in kidney. Detected abundantly in brain and testis and at lower levels in adrenal gland, kidney, lung and spleen (at protein level). In adrenal gland it is mostly found in the medulla but not in the cortex. In brain, it is found in the cerebellum and the CA2-CA3 regions of the hippocampus.

Its subcellular location is the membrane. It is found in the cytoplasm. It localises to the synapse. The protein resides in the cell projection. The protein localises to the growth cone. Its function is as follows. Myosins are actin-based motor molecules with ATPase activity. Unconventional myosins serve in intracellular movements. Regulates Rho by stimulating it's GTPase activity in neurons. Required for the regulation of neurite branching and motor neuron axon guidance. The polypeptide is Unconventional myosin-IXa (Myo9a) (Rattus norvegicus (Rat)).